We begin with the raw amino-acid sequence, 341 residues long: 33 kDa chaperonin (341 aa).

2 disulfide bridges follow: cysteine 245–cysteine 247 and cysteine 278–cysteine 281.

It belongs to the HSP33 family. In terms of processing, under oxidizing conditions two disulfide bonds are formed involving the reactive cysteines. Under reducing conditions zinc is bound to the reactive cysteines and the protein is inactive.

The protein resides in the cytoplasm. Redox regulated molecular chaperone. Protects both thermally unfolding and oxidatively damaged proteins from irreversible aggregation. Plays an important role in the bacterial defense system toward oxidative stress. The polypeptide is 33 kDa chaperonin (Thermus thermophilus (strain ATCC 27634 / DSM 579 / HB8)).